The primary structure comprises 124 residues: Large ribosomal subunit protein uL22 (124 aa).

This sequence belongs to the universal ribosomal protein uL22 family. In terms of assembly, part of the 50S ribosomal subunit.

Functionally, this protein binds specifically to 23S rRNA; its binding is stimulated by other ribosomal proteins, e.g. L4, L17, and L20. It is important during the early stages of 50S assembly. It makes multiple contacts with different domains of the 23S rRNA in the assembled 50S subunit and ribosome. The globular domain of the protein is located near the polypeptide exit tunnel on the outside of the subunit, while an extended beta-hairpin is found that lines the wall of the exit tunnel in the center of the 70S ribosome. The polypeptide is Large ribosomal subunit protein uL22 (Synechococcus sp. (strain JA-2-3B'a(2-13)) (Cyanobacteria bacterium Yellowstone B-Prime)).